The primary structure comprises 147 residues: Cytochrome c-type biogenesis protein CcmE (147 aa).

Residues 1–9 (MKNLKKQRR) are Cytoplasmic-facing. The chain crosses the membrane as a helical; Signal-anchor for type II membrane protein span at residues 10 to 30 (IQVIALATVALVLSTALIGYA). Topologically, residues 31 to 147 (MRDGINFFRA…EQGVYKGTEG (117 aa)) are periplasmic. Positions 123 and 127 each coordinate heme.

This sequence belongs to the CcmE/CycJ family.

Its subcellular location is the cell inner membrane. In terms of biological role, heme chaperone required for the biogenesis of c-type cytochromes. Transiently binds heme delivered by CcmC and transfers the heme to apo-cytochromes in a process facilitated by CcmF and CcmH. This chain is Cytochrome c-type biogenesis protein CcmE, found in Roseobacter denitrificans (strain ATCC 33942 / OCh 114) (Erythrobacter sp. (strain OCh 114)).